The chain runs to 139 residues: Small ribosomal subunit protein uS12 (139 aa).

The interval 1–44 is disordered; the sequence is MPTINQLVKKPRTSKVKKSTAPALNKGYNSHKKKATDLASPQKR. A compositionally biased stretch (basic residues) spans 9–18; it reads KKPRTSKVKK. Position 102 is a 3-methylthioaspartic acid (aspartate 102).

This sequence belongs to the universal ribosomal protein uS12 family. In terms of assembly, part of the 30S ribosomal subunit. Contacts proteins S8 and S17. May interact with IF1 in the 30S initiation complex.

In terms of biological role, with S4 and S5 plays an important role in translational accuracy. Its function is as follows. Interacts with and stabilizes bases of the 16S rRNA that are involved in tRNA selection in the A site and with the mRNA backbone. Located at the interface of the 30S and 50S subunits, it traverses the body of the 30S subunit contacting proteins on the other side and probably holding the rRNA structure together. The combined cluster of proteins S8, S12 and S17 appears to hold together the shoulder and platform of the 30S subunit. This is Small ribosomal subunit protein uS12 from Macrococcus caseolyticus (strain JCSC5402) (Macrococcoides caseolyticum).